Here is a 406-residue protein sequence, read N- to C-terminus: Putative nickel insertion protein (406 aa).

It belongs to the LarC family.

This chain is Putative nickel insertion protein, found in Methanosphaera stadtmanae (strain ATCC 43021 / DSM 3091 / JCM 11832 / MCB-3).